A 223-amino-acid polypeptide reads, in one-letter code: Ribonuclease 3 (223 aa).

An RNase III domain is found at 5–127 (LQRLEKKIGY…IIGAIYLDSD (123 aa)). Mg(2+) is bound at residue E40. D44 is a catalytic residue. Mg(2+) contacts are provided by D113 and E116. The active site involves E116. The DRBM domain occupies 154–223 (DPKTRLQEYL…AADIALGQLN (70 aa)).

Belongs to the ribonuclease III family. In terms of assembly, homodimer. Mg(2+) serves as cofactor.

The protein localises to the cytoplasm. It carries out the reaction Endonucleolytic cleavage to 5'-phosphomonoester.. Functionally, digests double-stranded RNA. Involved in the processing of primary rRNA transcript to yield the immediate precursors to the large and small rRNAs (23S and 16S). Processes some mRNAs, and tRNAs when they are encoded in the rRNA operon. Processes pre-crRNA and tracrRNA of type II CRISPR loci if present in the organism. This is Ribonuclease 3 from Aliivibrio fischeri (strain ATCC 700601 / ES114) (Vibrio fischeri).